We begin with the raw amino-acid sequence, 159 residues long: Immunoglobulin J chain (159 aa).

The signal sequence occupies residues 1-21 (MKTHLLLWGVLAIFVKAVLVT). Cystine bridges form between cysteine 34–cysteine 123, cysteine 93–cysteine 113, and cysteine 131–cysteine 156. Residue asparagine 70 is glycosylated (N-linked (GlcNAc...) (complex) asparagine).

As to quaternary structure, part of the secretory IgA (sIgA) complex that consists of two, four or five IgA monomers, and two additional non-Ig polypeptides, namely the JCHAIN and the secretory component (the proteolytic product of PIGR). Part of the secretory IgM (sIgM) complex that consist of five IgM monomers, and two additional non-Ig polypeptides, namely the JCHAIN and the secretory component (the proteolytic product of PIGR). JCHAIN-containing IgM interacts (via CH4 domain) with FCRM (via Ig-like domain).

The protein localises to the secreted. In terms of biological role, serves to link two monomer units of either IgM or IgA. In the case of IgM, the J chain-joined dimer is a nucleating unit for the IgM pentamer, and in the case of IgA it induces dimers and/or larger polymers. It also helps to bind these immunoglobulins to secretory component. The polypeptide is Immunoglobulin J chain (Mus musculus (Mouse)).